Consider the following 331-residue polypeptide: Centriolar satellite-associated tubulin polyglutamylase complex regulator 1 (331 aa).

The tract at residues 1–111 (MLSPERLALP…HCLLQLLCPD (111 aa)) is required for interaction with PCM1. Residues 1–225 (MLSPERLALP…SCPPPALVKE (225 aa)) are required for interaction with TPGS1, LRRC49, and TTLL1. Residues 112–331 (FPLELTQKAA…STEETDESET (220 aa)) are required for interaction with TPGS2. A disordered region spans residues 288-331 (SPEASCLPSRTPPRVGSPWRPLHHSRKVDGESDGSTEETDESET). Positions 318–331 (ESDGSTEETDESET) are enriched in acidic residues. Position 319 is a phosphoserine (Ser-319).

The protein belongs to the CSTPP1 family. Interacts with PCM1. Interacts with TTLL1, TPGS1, TPGS2 and LRRC49; the interactions link CSTPP1 to the complex TPGC. Binds to alpha-tubulin.

Its subcellular location is the cytoplasm. It is found in the cytoskeleton. The protein localises to the microtubule organizing center. It localises to the centrosome. The protein resides in the centriolar satellite. Its function is as follows. Regulator of the tubulin polyglutamylase complex (TPGC) that controls cytoskeletal organization, nuclear shape, and cilium disassembly by balancing microtubule and actin assembly. Regulates the assembly and stability of the TPGC and thereby modulates polyglutamylation of the microtubule, which antagonizes MAP4 binding. In Pongo abelii (Sumatran orangutan), this protein is Centriolar satellite-associated tubulin polyglutamylase complex regulator 1 (CSTPP1).